We begin with the raw amino-acid sequence, 616 residues long: Protein cereblon (616 aa).

Disordered regions lie at residues 1–39, 63–137, and 182–220; these read MDEE…DDSV, FGPS…AMPR, and SQER…DIDM. Over residues 11–32 the composition is skewed to low complexity; sequence AQEQEVAGSAGEAAAGPSGAEV. The span at 96-107 shows a compositional bias: acidic residues; sequence SEEDIVLDDGTE. The segment covering 183–192 has biased composition (basic and acidic residues); sequence QERRRSRNSD. Positions 194–203 are enriched in acidic residues; sequence VSPEAEDDEL. The segment covering 206-215 has biased composition (pro residues); that stretch reads HPPPPPPRPP. A Lon N-terminal domain is found at 257 to 482; that stretch reads HMLIFLHQYI…LIGGILKEET (226 aa). In terms of domain architecture, CULT spans 481-590; it reads ETLFYCRYCN…LAGSSVRIGK (110 aa). Residues C486, C489, C555, and C558 each contribute to the Zn(2+) site.

The protein belongs to the CRBN family. In terms of assembly, likely a component of a DCX (DDB1-CUL4-X-box) protein ligase complex. May interact with pic/DDB1. Ubiquitinated.

It is found in the nucleus. It functions in the pathway protein modification; protein ubiquitination. Functionally, substrate recognition component of a DCX (DDB1-CUL4-X-box) E3 protein ligase complex that mediates the ubiquitination and subsequent proteasomal degradation of target proteins. Has an essential role in mediating growth by negatively regulating insulin signaling. It also has a role in maintaining presynaptic function in the neuromuscular junction synapses of third-instar larvae. This chain is Protein cereblon, found in Drosophila pseudoobscura pseudoobscura (Fruit fly).